A 201-amino-acid polypeptide reads, in one-letter code: LexA repressor 1 (201 aa).

Positions 27 to 47 (LAEIAQAFGFASRNAAQKHVQ) form a DNA-binding region, H-T-H motif. Residues Ser-122 and Lys-159 each act as for autocatalytic cleavage activity in the active site.

It belongs to the peptidase S24 family. As to quaternary structure, homodimer.

It catalyses the reaction Hydrolysis of Ala-|-Gly bond in repressor LexA.. Functionally, represses a number of genes involved in the response to DNA damage (SOS response), including recA and lexA. In the presence of single-stranded DNA, RecA interacts with LexA causing an autocatalytic cleavage which disrupts the DNA-binding part of LexA, leading to derepression of the SOS regulon and eventually DNA repair. In Xanthomonas axonopodis pv. citri (strain 306), this protein is LexA repressor 1.